The primary structure comprises 255 residues: Malonyl-[acyl-carrier protein] O-methyltransferase (255 aa).

It belongs to the methyltransferase superfamily.

The enzyme catalyses malonyl-[ACP] + S-adenosyl-L-methionine = malonyl-[ACP] methyl ester + S-adenosyl-L-homocysteine. It participates in cofactor biosynthesis; biotin biosynthesis. Functionally, converts the free carboxyl group of a malonyl-thioester to its methyl ester by transfer of a methyl group from S-adenosyl-L-methionine (SAM). It allows to synthesize pimeloyl-ACP via the fatty acid synthetic pathway. This is Malonyl-[acyl-carrier protein] O-methyltransferase from Porphyromonas gingivalis (strain ATCC BAA-308 / W83).